Here is a 446-residue protein sequence, read N- to C-terminus: Na(+)-translocating NADH-quinone reductase subunit A (446 aa).

Belongs to the NqrA family. Composed of six subunits; NqrA, NqrB, NqrC, NqrD, NqrE and NqrF.

It carries out the reaction a ubiquinone + n Na(+)(in) + NADH + H(+) = a ubiquinol + n Na(+)(out) + NAD(+). Functionally, NQR complex catalyzes the reduction of ubiquinone-1 to ubiquinol by two successive reactions, coupled with the transport of Na(+) ions from the cytoplasm to the periplasm. NqrA to NqrE are probably involved in the second step, the conversion of ubisemiquinone to ubiquinol. The sequence is that of Na(+)-translocating NADH-quinone reductase subunit A from Vibrio parahaemolyticus serotype O3:K6 (strain RIMD 2210633).